The following is a 328-amino-acid chain: GTP 3',8-cyclase (328 aa).

The Radical SAM core domain occupies 1 to 229 (MNTVDYLRIS…ESFVPGNGPA (229 aa)). Position 8 (R8) interacts with GTP. [4Fe-4S] cluster contacts are provided by C15 and C19. S-adenosyl-L-methionine is bound at residue Y21. C22 provides a ligand contact to [4Fe-4S] cluster. GTP is bound at residue R60. Residue G64 coordinates S-adenosyl-L-methionine. T91 serves as a coordination point for GTP. S115 provides a ligand contact to S-adenosyl-L-methionine. K155 lines the GTP pocket. M189 contacts S-adenosyl-L-methionine. Residues C252 and C255 each contribute to the [4Fe-4S] cluster site. Residue 257–259 (RMR) coordinates GTP. Position 269 (C269) interacts with [4Fe-4S] cluster.

This sequence belongs to the radical SAM superfamily. MoaA family. In terms of assembly, monomer and homodimer. It depends on [4Fe-4S] cluster as a cofactor.

The catalysed reaction is GTP + AH2 + S-adenosyl-L-methionine = (8S)-3',8-cyclo-7,8-dihydroguanosine 5'-triphosphate + 5'-deoxyadenosine + L-methionine + A + H(+). Its pathway is cofactor biosynthesis; molybdopterin biosynthesis. Functionally, catalyzes the cyclization of GTP to (8S)-3',8-cyclo-7,8-dihydroguanosine 5'-triphosphate. This Trichodesmium erythraeum (strain IMS101) protein is GTP 3',8-cyclase.